Consider the following 766-residue polypeptide: Transcription factor GTE4 (766 aa).

3 disordered regions span residues 87–108, 234–262, and 388–412; these read GTNSHGDKNLTEAPSENLPGDD, RDTTDAQQPAGLTSDSAHATAAGSMPMEE, and GDKLPPAESNKKSKSSSKKQGGDVG. The span at 238 to 250 shows a compositional bias: polar residues; that stretch reads DAQQPAGLTSDSA. Residues 416-522 form the Bromo domain; it reads GAGTKVFKNC…QIFEERWAVI (107 aa). Disordered regions lie at residues 544–606 and 687–766; these read TMRS…NKRD and ARAE…SDQT. Positions 574-589 are enriched in low complexity; that stretch reads PTTTPGRTPTSATPSG. Residues 597–678 form the NET domain; the sequence is PKANEPNKRD…NYKKGLSKKK (82 aa). Residues 736 to 766 show a composition bias toward low complexity; the sequence is SRSSSSSSSSSSSSSSDSDSDSSSSSGSDQT.

As to expression, ubiquitously expressed.

It is found in the nucleus. Its function is as follows. Involved in the activation and maintenance of cell division in the meristems and by this controls cell numbers in differentiated organs. Its action in cell cycle regulation may be directed through the RB-E2F pathway. This is Transcription factor GTE4 (GTE4) from Arabidopsis thaliana (Mouse-ear cress).